The primary structure comprises 321 residues: Lipoyl synthase (321 aa).

Positions 68, 73, 79, 94, 98, 101, and 308 each coordinate [4Fe-4S] cluster. The 218-residue stretch at Phe-80–Thr-297 folds into the Radical SAM core domain.

Belongs to the radical SAM superfamily. Lipoyl synthase family. It depends on [4Fe-4S] cluster as a cofactor.

It is found in the cytoplasm. It catalyses the reaction [[Fe-S] cluster scaffold protein carrying a second [4Fe-4S](2+) cluster] + N(6)-octanoyl-L-lysyl-[protein] + 2 oxidized [2Fe-2S]-[ferredoxin] + 2 S-adenosyl-L-methionine + 4 H(+) = [[Fe-S] cluster scaffold protein] + N(6)-[(R)-dihydrolipoyl]-L-lysyl-[protein] + 4 Fe(3+) + 2 hydrogen sulfide + 2 5'-deoxyadenosine + 2 L-methionine + 2 reduced [2Fe-2S]-[ferredoxin]. It functions in the pathway protein modification; protein lipoylation via endogenous pathway; protein N(6)-(lipoyl)lysine from octanoyl-[acyl-carrier-protein]: step 2/2. Functionally, catalyzes the radical-mediated insertion of two sulfur atoms into the C-6 and C-8 positions of the octanoyl moiety bound to the lipoyl domains of lipoate-dependent enzymes, thereby converting the octanoylated domains into lipoylated derivatives. This Photorhabdus laumondii subsp. laumondii (strain DSM 15139 / CIP 105565 / TT01) (Photorhabdus luminescens subsp. laumondii) protein is Lipoyl synthase.